Reading from the N-terminus, the 614-residue chain is Serine/threonine-protein kinase Pkn1 (614 aa).

A Protein kinase domain is found at 13–276 (YKVIAELGHG…TSGEQLQVTL (264 aa)). ATP-binding positions include 19–27 (LGHGLWSRD) and K42.

This sequence belongs to the protein kinase superfamily. Ser/Thr protein kinase family. As to quaternary structure, interacts with PknD, interacts with and phosphorylates IncG. In terms of processing, autophosphorylates on serine and threonine residues. Present in elementary bodies 40 hours post-infection as 2 proteins of approximately 70 and 65 kDa; the smaller one may be due to differential phosphorylation or degradation.

The enzyme catalyses L-seryl-[protein] + ATP = O-phospho-L-seryl-[protein] + ADP + H(+). It catalyses the reaction L-threonyl-[protein] + ATP = O-phospho-L-threonyl-[protein] + ADP + H(+). Functionally, together with the serine/threonine kinase PknD, may play a role in specific interactions with host proteins during host intracellular growth. Autophosphorylates and phosphorylates IncG, an inclusion-membrane protein required for the modification of the nascent chlamydial inclusion. This chain is Serine/threonine-protein kinase Pkn1 (pkn1), found in Chlamydia trachomatis serovar L2 (strain ATCC VR-902B / DSM 19102 / 434/Bu).